Here is a 22-residue protein sequence, read N- to C-terminus: Cysteine proteinase (22 aa).

A disordered region spans residues 1 to 22 (GADDSDWRKKGAVNVIXKDQGQ).

Belongs to the peptidase C1 family.

The chain is Cysteine proteinase from Trichomonas vaginalis.